Here is a 253-residue protein sequence, read N- to C-terminus: Ribosome maturation factor RimP (253 aa).

Basic and acidic residues predominate over residues 186–199; sequence RRGKAAEREKKRDL. Residues 186–253 form a disordered region; that stretch reads RRGKAAEREK…RARRGEIDPD (68 aa). The span at 201–216 shows a compositional bias: low complexity; it reads LAPPLAPHAKPAAQAK. Basic and acidic residues predominate over residues 240 to 253; that stretch reads LAADRARRGEIDPD.

Belongs to the RimP family.

It is found in the cytoplasm. Its function is as follows. Required for maturation of 30S ribosomal subunits. The polypeptide is Ribosome maturation factor RimP (Bradyrhizobium sp. (strain BTAi1 / ATCC BAA-1182)).